The primary structure comprises 458 residues: F-box/LRR-repeat protein At5g02910 (458 aa).

An F-box domain is found at 10–56; it reads MDFISSLPDEILHHILSSVPTKSAIRTSLLSKRWRYVWSETPSLSID. 8 LRR repeats span residues 57 to 84, 86 to 112, 133 to 161, 162 to 187, 226 to 251, 260 to 285, 325 to 353, and 389 to 414; these read CRRADPNSIDKTLSFFSAPKITSFHLHT, LLNRIDSVNGCIEFAISHNAEKLSLES, KQLFVDSGSVHLIPRCTVSWTSLKNLSLS, NCTLSDESFLKILSGSPLLESLELLY, CLRLRHSRLPCSLVDVSSLTEADLNI, TAGFLQHNVVKMLQMLQNVEKLTIGG, KLLRYTPGLRKLTIHTVKCSSISELHLND, and ESNLVALFMERLLKSTKSLETMVVLL.

The protein is F-box/LRR-repeat protein At5g02910 of Arabidopsis thaliana (Mouse-ear cress).